The primary structure comprises 199 residues: Recombination protein RecR (199 aa).

A C4-type zinc finger spans residues 57 to 72 (CPICGNITEKEICDIC). Residues 80–176 (TTIMVVEQPK…KVTRLAAGLS (97 aa)) form the Toprim domain.

It belongs to the RecR family.

May play a role in DNA repair. It seems to be involved in an RecBC-independent recombinational process of DNA repair. It may act with RecF and RecO. The polypeptide is Recombination protein RecR (Lactobacillus acidophilus (strain ATCC 700396 / NCK56 / N2 / NCFM)).